Reading from the N-terminus, the 344-residue chain is Putative 2-hydroxyacid dehydrogenase YoaD (344 aa).

D193 contributes to the NAD(+) binding site. R251 is a catalytic residue. D275 is a binding site for NAD(+). E280 is a catalytic residue. H300 serves as the catalytic Proton donor.

This sequence belongs to the D-isomer specific 2-hydroxyacid dehydrogenase family.

In Bacillus subtilis (strain 168), this protein is Putative 2-hydroxyacid dehydrogenase YoaD (yoaD).